We begin with the raw amino-acid sequence, 185 residues long: Neuronal vesicle trafficking-associated protein 1 (185 aa).

The Cytoplasmic portion of the chain corresponds to 1 to 82 (MVKLGNNFSE…ITEGVSERFK (82 aa)). Residues 83–103 (VTVLVLFALAFLTCVVFLVVY) traverse the membrane as a helical; Signal-anchor for type II membrane protein segment. Residues 104–185 (KVYKYDHTCP…QETEAAEKSA (82 aa)) are Lumenal-facing.

This sequence belongs to the NSG family.

It is found in the membrane. Its subcellular location is the golgi apparatus. The protein resides in the trans-Golgi network membrane. It localises to the endosome membrane. The protein localises to the cell projection. It is found in the dendrite. Its subcellular location is the early endosome membrane. The protein resides in the late endosome membrane. It localises to the lysosome lumen. The protein localises to the recycling endosome membrane. It is found in the cytoplasmic vesicle membrane. Its subcellular location is the golgi stack membrane. The protein resides in the endosome. It localises to the multivesicular body membrane. Plays a role in the recycling mechanism in neurons of multiple receptors and acts at the level of early endosomes to promote sorting of receptors toward a recycling pathway. In Gallus gallus (Chicken), this protein is Neuronal vesicle trafficking-associated protein 1.